The sequence spans 157 residues: Transcription factor HES-2 (157 aa).

A bHLH domain is found at 13 to 70 (LRKSLKPLLEKRRRARINESLSQLKGLVLPLLGAETSRYSKLEKADILEMTVRFLREQ). In terms of domain architecture, Orange spans 86–119 (YLEGYRACLARLARVLPACSVLEPAVSARLLEHL). The interval 124–157 (VSGGPPSLTPASASAPAPSPPVPPPSSLGLWRPW) is disordered. Low complexity predominate over residues 125 to 139 (SGGPPSLTPASASAP). A compositionally biased stretch (pro residues) spans 140-149 (APSPPVPPPS). Residues 154–157 (WRPW) carry the WRPW motif motif.

As to quaternary structure, transcription repression requires formation of a complex with a corepressor protein of the Groucho/TLE family.

It localises to the nucleus. In terms of biological role, transcriptional repressor of genes that require a bHLH protein for their transcription. This chain is Transcription factor HES-2 (Hes2), found in Rattus norvegicus (Rat).